A 510-amino-acid chain; its full sequence is MKAVFKVTTALLACVFIARYLVCQQNGLGSFATDLQPICRHTEFSVGSLFDSKLVEGSAVSDYLVGKYSQSIKPLIERYPNSSLKRIMGYFYRFWYNIFSFLRLNELCCSLHSKLGPLLNHLRIAWYYLKPYTDNVKNVLENPFNSSTDWMKYGSFSADGTLTKPIFETDSETEDYEDDENENEDEDEDEDEDDVGIEDENKEYEFDGVQDGHGNSQLVTAAILQDLSKIIIGSNSHAELETYEAESLKMEYEAWIKAIDSKIHSAMALLDSEIQSVFEAEVQNKSIEITRNLDDLNTTVNEQLVFLDSKIKDINCTSKFDPVQNKIKYFDESGQVELEAYITKSSITSILKNYKIHLLDFEKSLFHSLDSFLTEMAKLAESIRLENVEVYEEWGDVMISQWSQRMAYMDVRGLHLEDQYDPAYIEENHSNWLRFMELKKKVISERNRLVKHDLDMTLILEWITKLKADFQNTKNNIQDTFLQRMNTADTLFKNRELKEQLEEEFVRQEH.

An N-terminal signal peptide occupies residues 1–23; sequence MKAVFKVTTALLACVFIARYLVC. Residues 167–195 form a disordered region; that stretch reads FETDSETEDYEDDENENEDEDEDEDEDDV. Over residues 169 to 195 the composition is skewed to acidic residues; the sequence is TDSETEDYEDDENENEDEDEDEDEDDV. Phosphotyrosine is present on tyrosine 354.

The protein belongs to the OSW/SHE family.

Its function is as follows. Involved in spore wall assembly. In Saccharomyces cerevisiae (strain ATCC 204508 / S288c) (Baker's yeast), this protein is Outer spore wall protein 7.